A 1324-amino-acid polypeptide reads, in one-letter code: Ubiquitin carboxyl-terminal hydrolase 42 (1324 aa).

2 disordered regions span residues 1–38 and 63–87; these read MTIV…SASW and YSSS…DGIA. Residues 10–25 are compositionally biased toward polar residues; it reads SSDPSAYQNQPGSSEA. A compositionally biased stretch (low complexity) spans 63–80; that stretch reads YSSSSVPDKSKPSPQKDQ. Ser75 is modified (phosphoserine). A USP domain is found at 111 to 412; it reads AGLQNLGNTC…QAYVLFYIRS (302 aa). Cys120 functions as the Nucleophile in the catalytic mechanism. The active-site Proton acceptor is the His371. Disordered stretches follow at residues 452 to 494, 536 to 707, 722 to 1026, 1085 to 1131, 1149 to 1254, and 1275 to 1294; these read IGPQ…NRAS, QSQP…MPAP, LSNK…RHRS, RAGL…HPDR, DRFH…VKDS, and GGFP…FREK. Residues 477-489 show a composition bias toward low complexity; that stretch reads PSSSMSSPNGNSS. Position 483 is a phosphoserine (Ser483). The span at 536–564 shows a compositional bias: polar residues; the sequence is QSQPNLHSNSLENPTKPVPSSTITNSAVQ. Low complexity predominate over residues 565-576; the sequence is STSNASTMSVSS. Positions 586–603 are enriched in polar residues; sequence ESCSQPVMNGKSKLNSSV. A phosphoserine mark is found at Ser754 and Ser856. Basic and acidic residues-rich tracts occupy residues 938 to 974, 984 to 1013, 1101 to 1113, 1149 to 1158, and 1165 to 1191; these read AKEK…SKTE, CPRE…ERRS, RGCE…ERHR, DRFHEHENGK, and DSVE…EEPK. At Ser1181 the chain carries Phosphoserine. Residues 1192–1206 show a composition bias toward basic residues; the sequence is AKKHKKSKKKKKSKD. Positions 1207–1218 are enriched in basic and acidic residues; the sequence is KHRDRDSRHQQD. 3 positions are modified to phosphoserine: Ser1219, Ser1222, and Ser1226. Residues 1231 to 1245 are compositionally biased toward basic residues; sequence HRHKKKKKKKKRHSR. A Phosphoserine modification is found at Ser1247.

This sequence belongs to the peptidase C19 family. As to expression, broadly expressed.

It catalyses the reaction Thiol-dependent hydrolysis of ester, thioester, amide, peptide and isopeptide bonds formed by the C-terminal Gly of ubiquitin (a 76-residue protein attached to proteins as an intracellular targeting signal).. Deubiquitinating enzyme which may play an important role during spermatogenesis. The polypeptide is Ubiquitin carboxyl-terminal hydrolase 42 (USP42) (Homo sapiens (Human)).